The following is a 336-amino-acid chain: Ribosomal RNA large subunit methyltransferase F (336 aa).

Basic residues predominate over residues 212-231; sequence HHLERSRGKPTGKGVRRVRS. A disordered region spans residues 212–234; sequence HHLERSRGKPTGKGVRRVRSGRM.

This sequence belongs to the methyltransferase superfamily. METTL16/RlmF family.

It is found in the cytoplasm. It carries out the reaction adenosine(1618) in 23S rRNA + S-adenosyl-L-methionine = N(6)-methyladenosine(1618) in 23S rRNA + S-adenosyl-L-homocysteine + H(+). Specifically methylates the adenine in position 1618 of 23S rRNA. The polypeptide is Ribosomal RNA large subunit methyltransferase F (Methylobacillus flagellatus (strain ATCC 51484 / DSM 6875 / VKM B-1610 / KT)).